A 154-amino-acid polypeptide reads, in one-letter code: Transcriptional repressor NrdR (154 aa).

Residues 3-34 (CPFCRHPDSRVIDSRETDEGQAIRRRRSCPEC) fold into a zinc finger. An ATP-cone domain is found at 46-136 (LAVVKRSGVT…VYRSFESADD (91 aa)).

Belongs to the NrdR family. Zn(2+) is required as a cofactor.

Its function is as follows. Negatively regulates transcription of bacterial ribonucleotide reductase nrd genes and operons by binding to NrdR-boxes. The chain is Transcriptional repressor NrdR from Mycobacterium avium (strain 104).